A 193-amino-acid chain; its full sequence is dCTP deaminase (193 aa).

DCTP contacts are provided by residues 110-115 (RSSLAR), aspartate 128, 136-138 (VLE), tyrosine 171, lysine 178, and glutamine 182. Glutamate 138 functions as the Proton donor/acceptor in the catalytic mechanism.

Belongs to the dCTP deaminase family. Homotrimer.

It catalyses the reaction dCTP + H2O + H(+) = dUTP + NH4(+). The protein operates within pyrimidine metabolism; dUMP biosynthesis; dUMP from dCTP (dUTP route): step 1/2. Its function is as follows. Catalyzes the deamination of dCTP to dUTP. This chain is dCTP deaminase, found in Aeromonas salmonicida (strain A449).